A 440-amino-acid chain; its full sequence is Ribosomal protein uS12 methylthiotransferase RimO (440 aa).

Positions 6-116 (PKVGFVSLGC…VVSAVHEVVP (111 aa)) constitute an MTTase N-terminal domain. [4Fe-4S] cluster-binding residues include Cys15, Cys51, Cys80, Cys149, Cys153, and Cys156. The 240-residue stretch at 135 to 374 (LTPRHYAYLK…AHQQAISSAR (240 aa)) folds into the Radical SAM core domain. Positions 376–440 (QAKIGLEMDV…DEYDMWGELV (65 aa)) constitute a TRAM domain.

It belongs to the methylthiotransferase family. RimO subfamily. [4Fe-4S] cluster is required as a cofactor.

The protein resides in the cytoplasm. It carries out the reaction L-aspartate(89)-[ribosomal protein uS12]-hydrogen + (sulfur carrier)-SH + AH2 + 2 S-adenosyl-L-methionine = 3-methylsulfanyl-L-aspartate(89)-[ribosomal protein uS12]-hydrogen + (sulfur carrier)-H + 5'-deoxyadenosine + L-methionine + A + S-adenosyl-L-homocysteine + 2 H(+). Catalyzes the methylthiolation of an aspartic acid residue of ribosomal protein uS12. This chain is Ribosomal protein uS12 methylthiotransferase RimO, found in Ectopseudomonas mendocina (strain ymp) (Pseudomonas mendocina).